We begin with the raw amino-acid sequence, 491 residues long: MAICNFFLQGRCRYGEKCWNEHPRGGGGGGGNRYQSQNRYQEQSRYQEQSRYPEQSRYPEQNRYQEPAGNAKGTWGASSQRYVQPSNFSKSTTWINRDSEKPSAGSFSGFGSRNVKSTAATGLPSTQNRFAALSSQDNSRDGQTDKGNILDDIMKDMEIWESSGQWMFSVYSMLKEKKNISGFTDFSPEELRLEYSVCQAEGNPLKYINAVQQLGSKWKQRILELKNPNPSIKTALLNELNSPSPDVTPGYSGQQNSAFGALSFPTSNTAPTAVTFSFKADTTTAAKPAVPNALAGSDFSAFGNKPTSAPSFGSGVAAAAASFSFAPSTISGFGSTASNSGFGAASNAAGFQGAANIAAAPAFGVASSTAPASGFGGGFGTTVNTGAKTSSVRDLFSAGTAVPVQTTLLFGQATGSLNTTASSTSLAGQPFKASTSATAVSGSFTSDNTSNPLFTPRNELSVEDLAQFEAKQFTLGKTPIKPPSADLLKVT.

The C3H1-type zinc-finger motif lies at 1–25; that stretch reads MAICNFFLQGRCRYGEKCWNEHPRG. Disordered stretches follow at residues 23–82 and 92–111; these read PRGG…SQRY and TTWINRDSEKPSAGSFSGFG. Positions 33 to 64 are enriched in polar residues; that stretch reads RYQSQNRYQEQSRYQEQSRYPEQSRYPEQNRY. 10 FG repeats span residues 110–111, 259–260, 302–303, 312–313, 333–334, 342–343, 363–364, 375–376, 379–380, and 410–411; these read FG.

As to quaternary structure, probable component of the nuclear pore complex (NPC).

The protein resides in the nucleus. It localises to the nuclear pore complex. The protein localises to the nucleus membrane. Its function is as follows. Required for the export of mRNAs containing poly(A) tails from the nucleus into the cytoplasm. The protein is Nucleoporin NUP42 (nup42) of Xenopus laevis (African clawed frog).